A 463-amino-acid polypeptide reads, in one-letter code: D(5)-like dopamine receptor (463 aa).

Over 1–39 the chain is Extracellular; sequence MENFYNETEPTEPRGGVDPLRVVTAAEDVPAPVGGVSVR. Asn-6 carries N-linked (GlcNAc...) asparagine glycosylation. A helical membrane pass occupies residues 40–65; it reads ALTGCVLCALIVSTLLGNTLVCAAVI. Over 66–76 the chain is Cytoplasmic; sequence KFRHLRSKVTN. A helical membrane pass occupies residues 77-103; the sequence is AFVVSLAVSDLFVAVLVMPWRAVSEVA. Residues 104–112 are Extracellular-facing; it reads GVWLFGRFC. The cysteines at positions 112 and 194 are disulfide-linked. The helical transmembrane segment at 113-135 threads the bilayer; sequence DTWVAFDIMCSTASILNLCVISM. Residues 136 to 154 are Cytoplasmic-facing; sequence DRYWAISNPFRYERRMTRR. Residues 155-180 form a helical membrane-spanning segment; that stretch reads FAFLMIAVAWTLSVLISFIPVQLNWH. The Extracellular portion of the chain corresponds to 181–198; it reads RADNNSSAHEQGDCNASL. The helical transmembrane segment at 199 to 223 threads the bilayer; sequence NRTYAISSSLISFYIPVLIMVGTYT. Topologically, residues 224–273 are cytoplasmic; the sequence is RIFRIAQTQIRRISSLERAAGQRAQNQSHRASTHDESALKTSFKRETKVL. Residues 274–301 form a helical membrane-spanning segment; that stretch reads KTLSVIMGVFVFCWLPFFVLNCVVPFCD. At 302–315 the chain is on the extracellular side; the sequence is VDKVGEPPCVSDTT. A helical transmembrane segment spans residues 316 to 337; the sequence is FNIFVWFGWANSSLNPVIYAFN. At 338–463 the chain is on the cytoplasmic side; it reads ADFRKAFTTI…PGQIQDLGDL (126 aa).

The protein belongs to the G-protein coupled receptor 1 family.

It is found in the cell membrane. Receptor for dopamine. This is D(5)-like dopamine receptor (dl) from Takifugu rubripes (Japanese pufferfish).